A 59-amino-acid chain; its full sequence is Potassium channel toxin alpha-KTx 3.10 (59 aa).

The N-terminal stretch at 1-22 (MKVFFAVLIALFVCSMVIGIHG) is a signal peptide. Disulfide bonds link C30/C50, C36/C55, and C40/C57.

Belongs to the short scorpion toxin superfamily. Potassium channel inhibitor family. Alpha-KTx 03 subfamily. Expressed by the venom gland.

It localises to the secreted. In terms of biological role, inhibits insect potassium channel. Is at least a 100-fold more potent against the Drosophila Shaker channel than towards its mammalian homologs Kv1.1/KCNA1 and Kv1.3/KCNA3. The polypeptide is Potassium channel toxin alpha-KTx 3.10 (Buthus israelis (Israeli scorpion)).